A 127-amino-acid polypeptide reads, in one-letter code: Holo-[acyl-carrier-protein] synthase (127 aa).

Residues D8 and E56 each coordinate Mg(2+).

It belongs to the P-Pant transferase superfamily. AcpS family. Mg(2+) is required as a cofactor.

It localises to the cytoplasm. It carries out the reaction apo-[ACP] + CoA = holo-[ACP] + adenosine 3',5'-bisphosphate + H(+). Functionally, transfers the 4'-phosphopantetheine moiety from coenzyme A to a Ser of acyl-carrier-protein. The chain is Holo-[acyl-carrier-protein] synthase from Cytophaga hutchinsonii (strain ATCC 33406 / DSM 1761 / CIP 103989 / NBRC 15051 / NCIMB 9469 / D465).